The following is a 536-amino-acid chain: CTP synthase (536 aa).

The tract at residues 1-268 (MSTKYVFVTG…DNLVCEKLHL (268 aa)) is amidoligase domain. Ser-14 is a CTP binding site. UTP is bound at residue Ser-14. 15–20 (ALGKGI) serves as a coordination point for ATP. Residue Tyr-55 participates in L-glutamine binding. Residue Asp-72 coordinates ATP. Residues Asp-72 and Glu-142 each coordinate Mg(2+). CTP is bound by residues 149 to 151 (DIE), 189 to 194 (KTKPTQ), and Lys-225. UTP is bound by residues 189 to 194 (KTKPTQ) and Lys-225. The region spanning 293-535 (KIALVGKYVE…IKAALEENKS (243 aa)) is the Glutamine amidotransferase type-1 domain. Gly-355 contributes to the L-glutamine binding site. Cys-382 serves as the catalytic Nucleophile; for glutamine hydrolysis. L-glutamine-binding positions include 383–386 (LGMQ), Glu-406, and Arg-463. Active-site residues include His-508 and Glu-510.

This sequence belongs to the CTP synthase family. Homotetramer.

The enzyme catalyses UTP + L-glutamine + ATP + H2O = CTP + L-glutamate + ADP + phosphate + 2 H(+). The catalysed reaction is L-glutamine + H2O = L-glutamate + NH4(+). It catalyses the reaction UTP + NH4(+) + ATP = CTP + ADP + phosphate + 2 H(+). The protein operates within pyrimidine metabolism; CTP biosynthesis via de novo pathway; CTP from UDP: step 2/2. Its activity is regulated as follows. Allosterically activated by GTP, when glutamine is the substrate; GTP has no effect on the reaction when ammonia is the substrate. The allosteric effector GTP functions by stabilizing the protein conformation that binds the tetrahedral intermediate(s) formed during glutamine hydrolysis. Inhibited by the product CTP, via allosteric rather than competitive inhibition. Functionally, catalyzes the ATP-dependent amination of UTP to CTP with either L-glutamine or ammonia as the source of nitrogen. Regulates intracellular CTP levels through interactions with the four ribonucleotide triphosphates. The sequence is that of CTP synthase from Clostridium beijerinckii (strain ATCC 51743 / NCIMB 8052) (Clostridium acetobutylicum).